Reading from the N-terminus, the 84-residue chain is Small ribosomal subunit protein bS18B (84 aa).

Positions 1–10 (MAVKRAPSKK) are enriched in basic residues. The segment at 1 to 20 (MAVKRAPSKKVRAEQARRPK) is disordered.

This sequence belongs to the bacterial ribosomal protein bS18 family. In terms of assembly, part of the 30S ribosomal subunit. Forms a tight heterodimer with protein bS6.

Its function is as follows. Binds as a heterodimer with protein bS6 to the central domain of the 16S rRNA, where it helps stabilize the platform of the 30S subunit. In Nocardia farcinica (strain IFM 10152), this protein is Small ribosomal subunit protein bS18B.